The primary structure comprises 84 residues: Small ribosomal subunit protein uS15 (84 aa).

The protein belongs to the universal ribosomal protein uS15 family. In terms of assembly, part of the 30S ribosomal subunit. Forms a bridge to the 50S subunit in the 70S ribosome, contacting the 23S rRNA.

Its function is as follows. One of the primary rRNA binding proteins, it binds directly to 16S rRNA where it helps nucleate assembly of the platform of the 30S subunit by binding and bridging several RNA helices of the 16S rRNA. In terms of biological role, forms an intersubunit bridge (bridge B4) with the 23S rRNA of the 50S subunit in the ribosome. The chain is Small ribosomal subunit protein uS15 from Thermosipho melanesiensis (strain DSM 12029 / CIP 104789 / BI429).